The sequence spans 893 residues: Exocyst complex component 4 (893 aa).

Residues 1–27 (MNENGATPVAAARRHRPLPAERATSNS) form a disordered region.

Belongs to the SEC8 family. The exocyst complex is composed of sec-3/exoc1, sec-5/exoc2, sec-6/exoc3, sec-8/exoc4, sec-10/exoc5, sec-15/exoc6, exo-70/exoc7 and exo-84/exoc8. In terms of tissue distribution, pseudocoelom.

Functionally, component of the exocyst complex involved in the docking of exocytic vesicles with fusion sites on the plasma membrane. In Caenorhabditis elegans, this protein is Exocyst complex component 4 (sec-8).